Here is an 87-residue protein sequence, read N- to C-terminus: Small ribosomal subunit protein uS15 (87 aa).

The segment at 1–22 (MSEINKAEIVASNARAPSDTGS) is disordered.

It belongs to the universal ribosomal protein uS15 family. In terms of assembly, part of the 30S ribosomal subunit. Forms a bridge to the 50S subunit in the 70S ribosome, contacting the 23S rRNA.

Functionally, one of the primary rRNA binding proteins, it binds directly to 16S rRNA where it helps nucleate assembly of the platform of the 30S subunit by binding and bridging several RNA helices of the 16S rRNA. Forms an intersubunit bridge (bridge B4) with the 23S rRNA of the 50S subunit in the ribosome. This Leptothrix cholodnii (strain ATCC 51168 / LMG 8142 / SP-6) (Leptothrix discophora (strain SP-6)) protein is Small ribosomal subunit protein uS15.